A 306-amino-acid polypeptide reads, in one-letter code: Ribose-5-phosphate isomerase (306 aa).

The disordered stretch occupies residues 45 to 68; it reads GRAQFGVGSTSTSSGDANSVCPAP. Polar residues predominate over residues 51–61; sequence VGSTSTSSGDA. Phosphoserine is present on Ser102.

This sequence belongs to the ribose 5-phosphate isomerase family.

The catalysed reaction is aldehydo-D-ribose 5-phosphate = D-ribulose 5-phosphate. The protein operates within carbohydrate degradation; pentose phosphate pathway; D-ribose 5-phosphate from D-ribulose 5-phosphate (non-oxidative stage): step 1/1. This chain is Ribose-5-phosphate isomerase, found in Sus scrofa (Pig).